A 106-amino-acid polypeptide reads, in one-letter code: Iron-sulfur cluster assembly protein CyaY (106 aa).

The protein belongs to the frataxin family.

Functionally, involved in iron-sulfur (Fe-S) cluster assembly. May act as a regulator of Fe-S biogenesis. This chain is Iron-sulfur cluster assembly protein CyaY, found in Photorhabdus laumondii subsp. laumondii (strain DSM 15139 / CIP 105565 / TT01) (Photorhabdus luminescens subsp. laumondii).